The chain runs to 274 residues: Bis(5'-nucleosyl)-tetraphosphatase, symmetrical (274 aa).

The protein belongs to the Ap4A hydrolase family.

It catalyses the reaction P(1),P(4)-bis(5'-adenosyl) tetraphosphate + H2O = 2 ADP + 2 H(+). Its function is as follows. Hydrolyzes diadenosine 5',5'''-P1,P4-tetraphosphate to yield ADP. This is Bis(5'-nucleosyl)-tetraphosphatase, symmetrical from Shewanella loihica (strain ATCC BAA-1088 / PV-4).